The chain runs to 397 residues: pH-sensitive adenylate cyclase MT1302 (397 aa).

The interval 1–191 is regulatory domain; it reads MTDHVREADD…IQDMLFMQLR (191 aa). Residues 192-206 form a linker region; sequence HMMETEAVNAGERAA. Positions 211-397 are catalytic domain; sequence PGARQVTVAF…QDDDLAGSSP (187 aa). The 109-residue stretch at 217–325 folds into the Guanylate cyclase domain; that stretch reads TVAFADLVGF…SPVNVASRVT (109 aa). Residue Asp-222 participates in Mn(2+) binding. Residue Lys-261 coordinates substrate. Asp-265 serves as a coordination point for Mn(2+). Arg-298 serves as a coordination point for ATP. Asp-312 lines the substrate pocket.

Belongs to the adenylyl cyclase class-4/guanylyl cyclase family. Homodimer. It depends on Mn(2+) as a cofactor. Mg(2+) is required as a cofactor.

The catalysed reaction is ATP = 3',5'-cyclic AMP + diphosphate. In terms of biological role, catalyzes the formation of the second messenger cAMP. The protein is pH-sensitive adenylate cyclase MT1302 of Mycobacterium tuberculosis (strain CDC 1551 / Oshkosh).